Reading from the N-terminus, the 469-residue chain is Glutamate--tRNA ligase (469 aa).

The 'HIGH' region motif lies at 8 to 18 (PSPTGFLHVGG). Residues Cys-97, Cys-99, Cys-124, and Asp-126 each coordinate Zn(2+). The 'KMSKS' region motif lies at 236–240 (KLSKR). Lys-239 provides a ligand contact to ATP.

It belongs to the class-I aminoacyl-tRNA synthetase family. Glutamate--tRNA ligase type 1 subfamily. In terms of assembly, monomer. Requires Zn(2+) as cofactor.

The protein resides in the cytoplasm. The enzyme catalyses tRNA(Glu) + L-glutamate + ATP = L-glutamyl-tRNA(Glu) + AMP + diphosphate. Functionally, catalyzes the attachment of glutamate to tRNA(Glu) in a two-step reaction: glutamate is first activated by ATP to form Glu-AMP and then transferred to the acceptor end of tRNA(Glu). This is Glutamate--tRNA ligase from Francisella philomiragia subsp. philomiragia (strain ATCC 25017 / CCUG 19701 / FSC 153 / O#319-036).